Reading from the N-terminus, the 251-residue chain is DNA repair protein RecO (251 aa).

This sequence belongs to the RecO family.

Its function is as follows. Involved in DNA repair and RecF pathway recombination. The protein is DNA repair protein RecO of Lactococcus lactis subsp. cremoris (strain MG1363).